The following is a 575-amino-acid chain: Amino-acid acetyltransferase, mitochondrial (575 aa).

The N-terminal 35 residues, 1–35 (MSKLRNLNRQFISNLKTHETVTNAKRNLILSILKS), are a transit peptide targeting the mitochondrion. Residues 398–557 (FTLNNLVQDG…QGIPGGVNIH (160 aa)) form the N-acetyltransferase domain.

This sequence belongs to the acetyltransferase family.

Its subcellular location is the mitochondrion. It catalyses the reaction L-glutamate + acetyl-CoA = N-acetyl-L-glutamate + CoA + H(+). Its pathway is amino-acid biosynthesis; L-arginine biosynthesis; N(2)-acetyl-L-ornithine from L-glutamate: step 1/4. N-acetylglutamate synthase involved in arginine biosynthesis. The chain is Amino-acid acetyltransferase, mitochondrial (ARG2) from Debaryomyces hansenii (strain ATCC 36239 / CBS 767 / BCRC 21394 / JCM 1990 / NBRC 0083 / IGC 2968) (Yeast).